A 445-amino-acid polypeptide reads, in one-letter code: Fibrinogen gamma chain (445 aa).

The first 25 residues, 1-25 (MNWSLQLRSFILCWALLLLSPTGLA), serve as a signal peptide directing secretion. N-linked (GlcNAc...) asparagine glycosylation occurs at Asn78. The region spanning 170–416 (RIHDTTGKDC…ETTMKIIPFN (247 aa)) is the Fibrinogen C-terminal domain. Cysteines 179 and 208 form a disulfide. Ca(2+)-binding residues include Asp344, Asp346, and Gly350. The cysteines at positions 352 and 365 are disulfide-linked. Positions 400-422 (TRWYSMKETTMKIIPFNRLSIGD) are gamma-chain polymerization, binding amino end of another fibrin alpha chain. An Isoglutamyl lysine isopeptide (Gln-Lys) (interchain with K-432) cross-link involves residue Gln424. The tract at residues 424 to 445 (QQHHMGGSKQVSVEHEVDVEYP) is disordered. Ser431 bears the Phosphoserine mark. Residue Lys432 forms an Isoglutamyl lysine isopeptide (Lys-Gln) (interchain with Q-424) linkage. Residues 435–445 (SVEHEVDVEYP) are compositionally biased toward basic and acidic residues.

As to quaternary structure, heterohexamer; disulfide linked. Contains 2 sets of 3 non-identical chains (alpha, beta and gamma). The 2 heterotrimers are in head to head conformation with the N-termini in a small central domain. In terms of processing, conversion of fibrinogen to fibrin is triggered by thrombin, which cleaves fibrinopeptides A and B from alpha and beta chains, and thus exposes the N-terminal polymerization sites responsible for the formation of the soft clot. The soft clot is converted into the hard clot by factor XIIIA which catalyzes the epsilon-(gamma-glutamyl)lysine cross-linking between gamma chains (stronger) and between alpha chains (weaker) of different monomers.

It is found in the secreted. In terms of biological role, together with fibrinogen alpha (FGA) and fibrinogen beta (FGB), polymerizes to form an insoluble fibrin matrix. Has a major function in hemostasis as one of the primary components of blood clots. In addition, functions during the early stages of wound repair to stabilize the lesion and guide cell migration during re-epithelialization. Was originally thought to be essential for platelet aggregation, based on in vitro studies using anticoagulated blood. However, subsequent studies have shown that it is not absolutely required for thrombus formation in vivo. Enhances expression of SELP in activated platelets via an ITGB3-dependent pathway. Maternal fibrinogen is essential for successful pregnancy. Fibrin deposition is also associated with infection, where it protects against IFNG-mediated hemorrhage. May also facilitate the antibacterial immune response via both innate and T-cell mediated pathways. This Rattus norvegicus (Rat) protein is Fibrinogen gamma chain (Fgg).